The chain runs to 60 residues: Putative transmembrane protein 74 (60 aa).

Helical transmembrane passes span 4 to 24 and 35 to 55; these read FSVI…FLTF and WVYI…YQAG.

It localises to the host membrane. The sequence is that of Putative transmembrane protein 74 (SIFV0074) from Sulfolobus islandicus filamentous virus (isolate Iceland/Hveragerdi) (SIFV).